The sequence spans 264 residues: 3-methyl-2-oxobutanoate hydroxymethyltransferase (264 aa).

2 residues coordinate Mg(2+): aspartate 45 and aspartate 84. 3-methyl-2-oxobutanoate-binding positions include aspartate 45–serine 46, aspartate 84, and lysine 112. Glutamate 114 serves as a coordination point for Mg(2+). Residue glutamate 181 is the Proton acceptor of the active site.

Belongs to the PanB family. Homodecamer; pentamer of dimers. It depends on Mg(2+) as a cofactor.

The protein resides in the cytoplasm. The catalysed reaction is 3-methyl-2-oxobutanoate + (6R)-5,10-methylene-5,6,7,8-tetrahydrofolate + H2O = 2-dehydropantoate + (6S)-5,6,7,8-tetrahydrofolate. The protein operates within cofactor biosynthesis; (R)-pantothenate biosynthesis; (R)-pantoate from 3-methyl-2-oxobutanoate: step 1/2. Catalyzes the reversible reaction in which hydroxymethyl group from 5,10-methylenetetrahydrofolate is transferred onto alpha-ketoisovalerate to form ketopantoate. The protein is 3-methyl-2-oxobutanoate hydroxymethyltransferase of Erwinia tasmaniensis (strain DSM 17950 / CFBP 7177 / CIP 109463 / NCPPB 4357 / Et1/99).